A 387-amino-acid chain; its full sequence is Protochlorophyllide reductase A, chloroplastic (387 aa).

A chloroplast-targeting transit peptide spans 1-35 (MALQVQAALLPSALSVPKKGNLSAVVKEPGFLSVS).

It belongs to the short-chain dehydrogenases/reductases (SDR) family. POR subfamily.

The protein localises to the plastid. It is found in the chloroplast. It carries out the reaction chlorophyllide a + NADP(+) = protochlorophyllide a + NADPH + H(+). It functions in the pathway porphyrin-containing compound metabolism; chlorophyll biosynthesis. Functionally, phototransformation of protochlorophyllide (Pchlide) to chlorophyllide (Chlide). This is Protochlorophyllide reductase A, chloroplastic (PORA) from Oryza sativa subsp. japonica (Rice).